We begin with the raw amino-acid sequence, 810 residues long: Venom phosphodiesterase 2 (810 aa).

Positions 1-23 (MIQQKVLFISLVAVTLGLGLGLG) are cleaved as a signal peptide. Residues 33–77 (QSWSCSKLRCGEKRIANVLCSCSDDCLEKKDCCTDYKSICKGETS) enclose the SMB domain. 9 cysteine pairs are disulfide-bonded: Cys-37–Cys-42, Cys-37–Cys-54, Cys-42–Cys-72, Cys-52–Cys-54, Cys-52–Cys-65, Cys-58–Cys-64, Cys-65–Cys-72, Cys-83–Cys-129, and Cys-91–Cys-303. Residues Asp-106 and Thr-144 each contribute to the a divalent metal cation site. Thr-144 acts as the AMP-threonine intermediate in catalysis. Residues Asn-175, Asn-218, and Asn-229 are each glycosylated (N-linked (GlcNAc...) asparagine). Lys-230 contributes to the AMP binding site. A divalent metal cation contacts are provided by Asp-264, His-268, Asp-311, and His-312. His-268 serves as a coordination point for AMP. Cystine bridges form between Cys-319/Cys-416, Cys-367/Cys-752, Cys-500/Cys-558, Cys-513/Cys-613, Cys-515/Cys-598, and Cys-721/Cys-731. The N-linked (GlcNAc...) asparagine glycan is linked to Asn-364. Residue His-421 coordinates a divalent metal cation. Asn-471, Asn-553, Asn-633, and Asn-704 each carry an N-linked (GlcNAc...) asparagine glycan.

This sequence belongs to the nucleotide pyrophosphatase/phosphodiesterase family. As to quaternary structure, monomer cleaved in two subunits; disulfide-linked. Is synthesized as a single-chain protein and is subsequently cleaved to form a two-subunit protein held together with disulfide bonds. It depends on a divalent metal cation as a cofactor. As to expression, expressed by venom gland.

The protein localises to the secreted. The enzyme catalyses ADP + H2O = AMP + phosphate + H(+). Hydrolyzes ADP with high activity. Shows weak or no activity on 5'-AMP, 5'-GMP, 3'-AMP, ATP, cAMP, and cGMP. Is devoid of monophosphatase and proteinase activities. Dose-dependently inhibits platelet aggregation induced by ADP (IC(50)=0.99 uM) and collagen (IC(50)=1.4 uM). The protein is Venom phosphodiesterase 2 of Crotalus adamanteus (Eastern diamondback rattlesnake).